A 379-amino-acid polypeptide reads, in one-letter code: Galactose-1-phosphate uridylyltransferase (379 aa).

The segment covering 1 to 15 (MSQSGADPEQRQQAS) has biased composition (polar residues). Residues 1–20 (MSQSGADPEQRQQASEADAM) form a disordered region. Position 75 (C75) interacts with Zn(2+). UDP-alpha-D-glucose contacts are provided by residues A81, 97–98 (ND), and N173. Zn(2+) is bound at residue H184. The Tele-UMP-histidine intermediate role is filled by H186. Q188 is a binding site for UDP-alpha-D-glucose. Zn(2+)-binding residues include E202, H301, H319, and H321. Residues 334 to 337 (KFMV) and 339 to 340 (YE) each bind UDP-alpha-D-glucose.

The protein belongs to the galactose-1-phosphate uridylyltransferase type 1 family. In terms of assembly, homodimer. Zn(2+) serves as cofactor.

It carries out the reaction alpha-D-galactose 1-phosphate + UDP-alpha-D-glucose = alpha-D-glucose 1-phosphate + UDP-alpha-D-galactose. It functions in the pathway carbohydrate metabolism; galactose metabolism. Its function is as follows. Plays an important role in galactose metabolism. This is Galactose-1-phosphate uridylyltransferase (Galt) from Rattus norvegicus (Rat).